Consider the following 367-residue polypeptide: Beta sliding clamp (367 aa).

Belongs to the beta sliding clamp family. Forms a ring-shaped head-to-tail homodimer around DNA which binds and tethers DNA polymerases and other proteins to the DNA. The DNA replisome complex has a single clamp-loading complex (3 tau and 1 each of delta, delta', psi and chi subunits) which binds 3 Pol III cores (1 core on the leading strand and 2 on the lagging strand) each with a beta sliding clamp dimer. Additional proteins in the replisome are other copies of gamma, psi and chi, Ssb, DNA helicase and RNA primase.

Its subcellular location is the cytoplasm. In terms of biological role, confers DNA tethering and processivity to DNA polymerases and other proteins. Acts as a clamp, forming a ring around DNA (a reaction catalyzed by the clamp-loading complex) which diffuses in an ATP-independent manner freely and bidirectionally along dsDNA. Initially characterized for its ability to contact the catalytic subunit of DNA polymerase III (Pol III), a complex, multichain enzyme responsible for most of the replicative synthesis in bacteria; Pol III exhibits 3'-5' exonuclease proofreading activity. The beta chain is required for initiation of replication as well as for processivity of DNA replication. This Proteus mirabilis protein is Beta sliding clamp (dnaN).